Consider the following 198-residue polypeptide: V-type ATP synthase subunit E (198 aa).

It belongs to the V-ATPase E subunit family.

Produces ATP from ADP in the presence of a proton gradient across the membrane. This chain is V-type ATP synthase subunit E, found in Acetivibrio thermocellus (strain ATCC 27405 / DSM 1237 / JCM 9322 / NBRC 103400 / NCIMB 10682 / NRRL B-4536 / VPI 7372) (Clostridium thermocellum).